The following is a 451-amino-acid chain: Protoheme IX farnesyltransferase, mitochondrial (451 aa).

A run of 6 helical transmembrane segments spans residues 149–169 (TILV…PATV), 240–260 (PTVA…YTSL), 265–285 (IINT…GWAA), 289–309 (LTHP…FPHF), 339–359 (VALR…YFNI), and 414–434 (KAFF…ILHK).

Belongs to the UbiA prenyltransferase family.

It localises to the mitochondrion membrane. In terms of biological role, converts protoheme IX and farnesyl diphosphate to heme O. This is Protoheme IX farnesyltransferase, mitochondrial (COX10) from Candida glabrata (strain ATCC 2001 / BCRC 20586 / JCM 3761 / NBRC 0622 / NRRL Y-65 / CBS 138) (Yeast).